Consider the following 248-residue polypeptide: Membrane-spanning 4-domains subfamily A member 6A (248 aa).

The Cytoplasmic segment spans residues 1 to 46 (MTSQPVPNETIIVLPSNVINFSQAEKPEPTNQGQDSLKKHLHAEIK). Residues 47 to 67 (VIGTIQILCGMMVLSLGIILA) traverse the membrane as a helical segment. Topologically, residues 68 to 84 (SASFSPNFTQVTSTLLN) are extracellular. A helical membrane pass occupies residues 85–105 (SAYPFIGPFFFIISGSLSIAT). The Cytoplasmic portion of the chain corresponds to 106–116 (EKRLTKLLVHS). The helical transmembrane segment at 117-137 (SLVGSILSALSALVGFIILSV) threads the bilayer. The Extracellular portion of the chain corresponds to 138-185 (KQATLNPASLQCELDKNNIPTRSYVSYFYHDSLYTTDCYTAKASLAGT). The chain crosses the membrane as a helical span at residues 186 to 206 (LSLMLICTLLEFCLAVLTAVL). Residues 207–248 (RWKQAYSDFPGSVLFLPHSYIGNSGMSSKMTHDCGYEELLTS) are Cytoplasmic-facing.

The protein belongs to the MS4A family. Variable expression in some B-cell, myelomonocytic, and erythroleukemia cell lines.

The protein resides in the membrane. May be involved in signal transduction as a component of a multimeric receptor complex. This is Membrane-spanning 4-domains subfamily A member 6A (MS4A6A) from Homo sapiens (Human).